The primary structure comprises 399 residues: Salivary protein Tsal1 (399 aa).

A signal peptide spans 1–22; sequence MALKLVYGVFTLALLGISSVNA. An N-linked (GlcNAc...) asparagine glycan is attached at Asn268.

This sequence belongs to the DNA/RNA non-specific endonuclease family. It depends on a divalent metal cation as a cofactor. Saliva (at protein level).

It localises to the secreted. Functionally, binds double-stranded DNA (dsDNA) with high affinity. Binds double-stranded RNA. Binds single-stranded DNA with lower affinity and with a preference for purine-rich sequences. Shows residual nuclease activity for dsDNA. May facilitate blood meal intake by lowering the local viscosity created by the release of host DNA. This is Salivary protein Tsal1 from Glossina morsitans morsitans (Savannah tsetse fly).